The following is a 171-amino-acid chain: uncharacterized protein (171 aa).

2 helical membrane-spanning segments follow: residues 13–35 (VGAS…IATA) and 50–72 (ATVL…AYVV).

It localises to the cell membrane. This is an uncharacterized protein from Treponema pallidum (strain Nichols).